Here is a 752-residue protein sequence, read N- to C-terminus: Reticulon-1-B (752 aa).

Disordered stretches follow at residues 1–57 (MAAN…TSTD), 264–319 (EYPG…SEKQ), 334–424 (KAKE…SPSI), and 444–465 (ESCD…SPMM). A compositionally biased stretch (polar residues) spans 264–273 (EYPGNQQGKS). A compositionally biased stretch (basic and acidic residues) spans 334–361 (KAKEGTKRFSSETNDEKQSRSFHAEKQD). Polar residues predominate over residues 363–383 (TVMSTEATSASHYTKASSAES). In terms of domain architecture, Reticulon spans 566–752 (AIDLLYWRDV…AKIPGTKQKE (187 aa)). 2 helical membrane passes run 580 to 600 (IVFG…VVSV) and 684 to 704 (VLMW…LLIM).

Isoform A and isoform C are both expressed in the animal hemisphere (presumptive neural ectoderm) of blastula and gastrula stage embryos, and along the anterior neural border, in the panplacodal primordium, and in the dorsolateral side of archenteron roof of late neurula embryos. At the tailbud stage, expression of the isoforms begin to differ. Isoform A localizes to the cranial placodes including the trigeminal placode, lateral line placode, olfactory placode and otic vesicle. Isoform C localizes to the central nervous system, including the spinal cord, prosencephalon, mesencephalon and rhombencephalon, as well as the lateral line placode, otic vesicle and pronephros.

The protein resides in the endoplasmic reticulum membrane. Its subcellular location is the nucleus. In terms of biological role, inhibits amyloid precursor protein processing, probably by blocking BACE1 activity. The sequence is that of Reticulon-1-B (rtn1-b) from Xenopus laevis (African clawed frog).